The following is a 72-amino-acid chain: Penaeidin-2b (72 aa).

The signal sequence occupies residues 1–21 (MRLVVCLVFLASFALVCQGEA). Disulfide bonds link cysteine 45-cysteine 59, cysteine 48-cysteine 66, and cysteine 60-cysteine 67. Residue lysine 71 is modified to Lysine amide.

It belongs to the penaeidin family.

The protein localises to the cytoplasmic granule. Antibacterial and antifungal activity. Presents chitin-binding activity. This chain is Penaeidin-2b, found in Penaeus vannamei (Whiteleg shrimp).